The primary structure comprises 605 residues: Leucine-rich repeat-containing protein 40 (605 aa).

Positions 1 to 26 are disordered; that stretch reads MSRFRRGGKAPDPLSGFRAPKEQEPA. LRR repeat units follow at residues 83-104, 106-127, 129-151, 152-173, 175-196, 198-219, 221-242, 244-265, 266-287, 290-311, 313-335, 336-357, 429-450, 453-475, 476-497, 499-520, 522-543, 546-567, and 569-590; these read DLTKLILASNKLQLLSEDISLL, ALVVLDIHDNQIVSLPCAIKEL, NLQKLNISHNKIKQLPKELQHLQ, NLKSLLLQHNQLEELPDSIGHL, ILEELDVSNNCLRSISSSVGQL, GLVKFNLSSNKLTALPTEIGKM, NLKQLDCTSNLLENVPASVAGM, SLEQLYLRQNKLTYLPELPFLT, KLKELHVGNNQIQTLGPEHLQN, SLSVLELRYNKLKVLPEEISLL, GLERLDLSNNDLGSLPCTLGSLP, NLKSLQLEGNPLRGIRRDILNK, FITTVNFSKNQLTEVPARIVEM, SVCDVNLGFNKISSISLNLCMLL, KLTHIDMRNNVLTSLPSEMEAM, RLQSVILSFNRFKHFPDVLYRI, TLETILISSNQIGSIDPTQLIK, KLSTLDLQNNDLLQIPPALGNC, and SLRALHLEGNPFRNPRAAILAK.

In Xenopus tropicalis (Western clawed frog), this protein is Leucine-rich repeat-containing protein 40 (lrrc40).